Reading from the N-terminus, the 334-residue chain is Glycerol-3-phosphate dehydrogenase [NAD(P)+] (334 aa).

Residues S14, Y15, R35, and K109 each contribute to the NADPH site. The sn-glycerol 3-phosphate site is built by K109, G138, and T140. A142 serves as a coordination point for NADPH. K194, D247, S257, R258, and N259 together coordinate sn-glycerol 3-phosphate. Residue K194 is the Proton acceptor of the active site. R258 is an NADPH binding site. NADPH is bound by residues V282 and E284.

The protein belongs to the NAD-dependent glycerol-3-phosphate dehydrogenase family.

It localises to the cytoplasm. The enzyme catalyses sn-glycerol 3-phosphate + NAD(+) = dihydroxyacetone phosphate + NADH + H(+). It carries out the reaction sn-glycerol 3-phosphate + NADP(+) = dihydroxyacetone phosphate + NADPH + H(+). The protein operates within membrane lipid metabolism; glycerophospholipid metabolism. Its function is as follows. Catalyzes the reduction of the glycolytic intermediate dihydroxyacetone phosphate (DHAP) to sn-glycerol 3-phosphate (G3P), the key precursor for phospholipid synthesis. This is Glycerol-3-phosphate dehydrogenase [NAD(P)+] from Colwellia psychrerythraea (strain 34H / ATCC BAA-681) (Vibrio psychroerythus).